Here is a 404-residue protein sequence, read N- to C-terminus: Probable ketol-acid reductoisomerase, mitochondrial (404 aa).

The region spanning 63-253 is the KARI N-terminal Rossmann domain; it reads TKENVWERSD…AVGSGFIYQT (191 aa). NADP(+) is bound by residues 91–100, 115–120, and 153–157; these read GYGSQGHGQG, RKDGAS, and SDAAQ. The active site involves H178. One can recognise a KARI C-terminal knotted domain in the interval 254 to 401; sequence TFKKEVISDL…EVVRSLRPEH (148 aa). At S261 the chain carries Phosphoserine. Mg(2+) contacts are provided by D262, E266, E298, and E302. S324 serves as a coordination point for substrate.

Belongs to the ketol-acid reductoisomerase family. Requires Mg(2+) as cofactor.

The protein localises to the mitochondrion. It catalyses the reaction (2R)-2,3-dihydroxy-3-methylbutanoate + NADP(+) = (2S)-2-acetolactate + NADPH + H(+). The catalysed reaction is (2R,3R)-2,3-dihydroxy-3-methylpentanoate + NADP(+) = (S)-2-ethyl-2-hydroxy-3-oxobutanoate + NADPH + H(+). It participates in amino-acid biosynthesis; L-isoleucine biosynthesis; L-isoleucine from 2-oxobutanoate: step 2/4. It functions in the pathway amino-acid biosynthesis; L-valine biosynthesis; L-valine from pyruvate: step 2/4. This chain is Probable ketol-acid reductoisomerase, mitochondrial (ilv5), found in Schizosaccharomyces pombe (strain 972 / ATCC 24843) (Fission yeast).